A 211-amino-acid polypeptide reads, in one-letter code: Imidazole glycerol phosphate synthase subunit HisH (211 aa).

The 209-residue stretch at 3–211 (VIAVIDYDMG…VSQIKAPVLV (209 aa)) folds into the Glutamine amidotransferase type-1 domain. The active-site Nucleophile is the C81. Active-site residues include H186 and E188.

As to quaternary structure, heterodimer of HisH and HisF.

The protein localises to the cytoplasm. It carries out the reaction 5-[(5-phospho-1-deoxy-D-ribulos-1-ylimino)methylamino]-1-(5-phospho-beta-D-ribosyl)imidazole-4-carboxamide + L-glutamine = D-erythro-1-(imidazol-4-yl)glycerol 3-phosphate + 5-amino-1-(5-phospho-beta-D-ribosyl)imidazole-4-carboxamide + L-glutamate + H(+). It catalyses the reaction L-glutamine + H2O = L-glutamate + NH4(+). The protein operates within amino-acid biosynthesis; L-histidine biosynthesis; L-histidine from 5-phospho-alpha-D-ribose 1-diphosphate: step 5/9. IGPS catalyzes the conversion of PRFAR and glutamine to IGP, AICAR and glutamate. The HisH subunit catalyzes the hydrolysis of glutamine to glutamate and ammonia as part of the synthesis of IGP and AICAR. The resulting ammonia molecule is channeled to the active site of HisF. The protein is Imidazole glycerol phosphate synthase subunit HisH of Cyanothece sp. (strain PCC 7425 / ATCC 29141).